Consider the following 258-residue polypeptide: UPF0246 protein Sden_2729 (258 aa).

It belongs to the UPF0246 family.

This is UPF0246 protein Sden_2729 from Shewanella denitrificans (strain OS217 / ATCC BAA-1090 / DSM 15013).